Reading from the N-terminus, the 173-residue chain is Crossover junction endodeoxyribonuclease RuvC (173 aa).

Active-site residues include Asp-10, Glu-71, and Asp-143. Mg(2+) is bound by residues Asp-10, Glu-71, and Asp-143.

It belongs to the RuvC family. As to quaternary structure, homodimer which binds Holliday junction (HJ) DNA. The HJ becomes 2-fold symmetrical on binding to RuvC with unstacked arms; it has a different conformation from HJ DNA in complex with RuvA. In the full resolvosome a probable DNA-RuvA(4)-RuvB(12)-RuvC(2) complex forms which resolves the HJ. It depends on Mg(2+) as a cofactor.

The protein localises to the cytoplasm. It catalyses the reaction Endonucleolytic cleavage at a junction such as a reciprocal single-stranded crossover between two homologous DNA duplexes (Holliday junction).. The RuvA-RuvB-RuvC complex processes Holliday junction (HJ) DNA during genetic recombination and DNA repair. Endonuclease that resolves HJ intermediates. Cleaves cruciform DNA by making single-stranded nicks across the HJ at symmetrical positions within the homologous arms, yielding a 5'-phosphate and a 3'-hydroxyl group; requires a central core of homology in the junction. The consensus cleavage sequence is 5'-(A/T)TT(C/G)-3'. Cleavage occurs on the 3'-side of the TT dinucleotide at the point of strand exchange. HJ branch migration catalyzed by RuvA-RuvB allows RuvC to scan DNA until it finds its consensus sequence, where it cleaves and resolves the cruciform DNA. The polypeptide is Crossover junction endodeoxyribonuclease RuvC (Gloeobacter violaceus (strain ATCC 29082 / PCC 7421)).